The following is a 234-amino-acid chain: Enolase-phosphatase E1 (234 aa).

The interval 212–234 (RPGNYPQPQHSHFKISSFEGLNP) is disordered.

Belongs to the HAD-like hydrolase superfamily. MasA/MtnC family. In terms of assembly, monomer. Mg(2+) serves as cofactor.

The enzyme catalyses 5-methylsulfanyl-2,3-dioxopentyl phosphate + H2O = 1,2-dihydroxy-5-(methylsulfanyl)pent-1-en-3-one + phosphate. It participates in amino-acid biosynthesis; L-methionine biosynthesis via salvage pathway; L-methionine from S-methyl-5-thio-alpha-D-ribose 1-phosphate: step 3/6. The protein operates within amino-acid biosynthesis; L-methionine biosynthesis via salvage pathway; L-methionine from S-methyl-5-thio-alpha-D-ribose 1-phosphate: step 4/6. Functionally, bifunctional enzyme that catalyzes the enolization of 2,3-diketo-5-methylthiopentyl-1-phosphate (DK-MTP-1-P) into the intermediate 2-hydroxy-3-keto-5-methylthiopentenyl-1-phosphate (HK-MTPenyl-1-P), which is then dephosphorylated to form the acireductone 1,2-dihydroxy-3-keto-5-methylthiopentene (DHK-MTPene). This chain is Enolase-phosphatase E1, found in Leptospira interrogans serogroup Icterohaemorrhagiae serovar copenhageni (strain Fiocruz L1-130).